Reading from the N-terminus, the 324-residue chain is Mevalonate kinase (324 aa).

103–113 (PPRAGLGSSAA) contributes to the ATP binding site. Catalysis depends on Asp154, which acts as the Proton acceptor.

The protein belongs to the GHMP kinase family. Mevalonate kinase subfamily. Homodimer. Mg(2+) is required as a cofactor.

It localises to the cytoplasm. The enzyme catalyses (R)-mevalonate + ATP = (R)-5-phosphomevalonate + ADP + H(+). The protein operates within isoprenoid biosynthesis; isopentenyl diphosphate biosynthesis via mevalonate pathway; isopentenyl diphosphate from (R)-mevalonate: step 1/3. In terms of biological role, catalyzes the phosphorylation of (R)-mevalonate (MVA) to (R)-mevalonate 5-phosphate (MVAP). Functions in the mevalonate (MVA) pathway leading to isopentenyl diphosphate (IPP), a key precursor for the biosynthesis of isoprenoid compounds such as archaeal membrane lipids. This chain is Mevalonate kinase, found in Aeropyrum pernix (strain ATCC 700893 / DSM 11879 / JCM 9820 / NBRC 100138 / K1).